The following is a 166-amino-acid chain: MSQYFTLFRIEPAFDIDTENLEQTYRALAARFHPDKFASASAFEQKQAVMMSSTINDAYRTLKNPIDRAAYLLKTSGIDADAPEHTSFASEFLMQQMEWRETLMEARAGKDLESLKNLDNEIRDEQEKLFCGLKQSFARQDYDTAAQQVRQGRFLDKLRNEISSAL.

Positions 3 to 75 (QYFTLFRIEP…IDRAAYLLKT (73 aa)) constitute a J domain.

Belongs to the HscB family. In terms of assembly, interacts with HscA and stimulates its ATPase activity.

Functionally, co-chaperone involved in the maturation of iron-sulfur cluster-containing proteins. Seems to help targeting proteins to be folded toward HscA. The chain is Co-chaperone protein HscB homolog from Neisseria meningitidis serogroup A / serotype 4A (strain DSM 15465 / Z2491).